Here is a 360-residue protein sequence, read N- to C-terminus: Variable large protein 14 (360 aa).

Positions 1-18 (MRKRISAIIMTLFMVLAS) are cleaved as a signal peptide. C19 carries N-palmitoyl cysteine lipidation. The S-diacylglycerol cysteine moiety is linked to residue C19.

It belongs to the variable large protein (Vlp) family. Beta subfamily.

The protein localises to the cell outer membrane. Its function is as follows. The Vlp and Vsp proteins are antigenically distinct proteins, only one vlp or vsp gene is transcriptionally active at any one time. Switching between these genes is a mechanism of host immune response evasion. This is Variable large protein 14 from Borrelia hermsii.